The following is a 235-amino-acid chain: (5-formylfuran-3-yl)methyl phosphate synthase (235 aa).

Residue Lys27 is the Schiff-base intermediate with substrate of the active site. The active-site Proton acceptor is Lys85.

It belongs to the MfnB family.

It catalyses the reaction 2 D-glyceraldehyde 3-phosphate = 4-(hydroxymethyl)-2-furancarboxaldehyde phosphate + phosphate + 2 H2O. Its pathway is cofactor biosynthesis; methanofuran biosynthesis. Catalyzes the formation of 4-(hydroxymethyl)-2-furancarboxaldehyde phosphate (4-HFC-P) from two molecules of glyceraldehyde-3-P (GA-3-P). The sequence is that of (5-formylfuran-3-yl)methyl phosphate synthase from Methanococcus aeolicus (strain ATCC BAA-1280 / DSM 17508 / OCM 812 / Nankai-3).